A 206-amino-acid chain; its full sequence is Small ribosomal subunit protein uS4 (206 aa).

Residues 96 to 156 form the S4 RNA-binding domain; the sequence is CRLDNVVYRM…EKSLNQLRIV (61 aa).

This sequence belongs to the universal ribosomal protein uS4 family. Part of the 30S ribosomal subunit. Contacts protein S5. The interaction surface between S4 and S5 is involved in control of translational fidelity.

Its function is as follows. One of the primary rRNA binding proteins, it binds directly to 16S rRNA where it nucleates assembly of the body of the 30S subunit. Functionally, with S5 and S12 plays an important role in translational accuracy. The sequence is that of Small ribosomal subunit protein uS4 from Pseudomonas entomophila (strain L48).